The sequence spans 305 residues: Ribonuclease Z (305 aa).

Zn(2+) is bound by residues His61, His63, Asp65, His66, His138, Asp208, and His266. Catalysis depends on Asp65, which acts as the Proton acceptor.

Belongs to the RNase Z family. As to quaternary structure, homodimer. Requires Zn(2+) as cofactor.

The catalysed reaction is Endonucleolytic cleavage of RNA, removing extra 3' nucleotides from tRNA precursor, generating 3' termini of tRNAs. A 3'-hydroxy group is left at the tRNA terminus and a 5'-phosphoryl group is left at the trailer molecule.. Its function is as follows. Zinc phosphodiesterase, which displays some tRNA 3'-processing endonuclease activity. Probably involved in tRNA maturation, by removing a 3'-trailer from precursor tRNA. This Methanosarcina acetivorans (strain ATCC 35395 / DSM 2834 / JCM 12185 / C2A) protein is Ribonuclease Z.